The primary structure comprises 189 residues: dTTP/UTP pyrophosphatase (189 aa).

The active-site Proton acceptor is Asp-70. The cysteines at positions 74 and 79 are disulfide-linked.

Belongs to the Maf family. YhdE subfamily. As to quaternary structure, homodimer. The cofactor is a divalent metal cation.

It localises to the cytoplasm. The enzyme catalyses dTTP + H2O = dTMP + diphosphate + H(+). It catalyses the reaction UTP + H2O = UMP + diphosphate + H(+). It carries out the reaction CTP + H2O = CMP + diphosphate + H(+). The catalysed reaction is psi-UTP + H2O = psi-UMP + diphosphate + H(+). The enzyme catalyses 5-methyl-CTP + H2O = 5-methyl-CMP + diphosphate + H(+). It catalyses the reaction 5-methyl-UTP + H2O = 5-methyl-UMP + diphosphate + H(+). In terms of biological role, nucleoside triphosphate pyrophosphatase that hydrolyzes dTTP and UTP. Can also hydrolyze CTP and the modified nucleotides pseudo-UTP, 5-methyl-CTP (m(5)CTP) and 5-methyl-UTP (m(5)UTP). May have a dual role in cell division arrest and in preventing the incorporation of modified nucleotides into cellular nucleic acids. The chain is dTTP/UTP pyrophosphatase from Bacillus subtilis (strain 168).